The sequence spans 367 residues: DNA-directed RNA polymerase II subunit GRINL1A (367 aa).

Residues 15–40 adopt a coiled-coil conformation; it reads DLERRSLAELREMLKRQERLLRNEKF. The important for transcription repressor activity stretch occupies residues 29 to 68; sequence KRQERLLRNEKFICKLPDKGKKIFDSFAKLKAAIAECEEV. Composition is skewed to polar residues over residues 117–131, 176–185, and 205–225; these read SVDN…QNQG, RVSSQAEDTS, and GEQQ…SGTQ. 3 disordered regions span residues 117-185, 203-225, and 254-281; these read SVDN…EDTS, DQGE…SGTQ, and PFRQ…RRDK. The segment at 226–297 is interaction with Pol II; it reads KKPHYMEVLE…TAARLLPLHH (72 aa). Ser269 bears the Phosphoserine mark. The interval 298–313 is important for transcription repressor activity; the sequence is MPTQLLSIEESLALQK. A coiled-coil region spans residues 300-329; sequence TQLLSIEESLALQKQRKQKYEEMQAKLAAQ. The interaction with Pol II stretch occupies residues 314–339; sequence QRKQKYEEMQAKLAAQKLAERLNIKM. Positions 335 to 367 are disordered; sequence LNIKMRSYNPEGESSGRYREVRDEDDDWSSDEF. The span at 357–367 shows a compositional bias: acidic residues; that stretch reads DEDDDWSSDEF.

It belongs to the GRINL1 family. In terms of assembly, component of the Pol II(G) complex, which contains the RNA polymerase II (Pol II) core complex subunits and POLR2M isoform 1. Pol II(G) appears to be an abundant form of Pol II. Post-translationally, dephosphorylated at Ser-269 by the PNUTS-PP1 complex, promoting RNA polymerase II transcription pause-release.

The protein resides in the nucleus. Its function is as follows. Appears to be a stable component of the Pol II(G) complex form of RNA polymerase II (Pol II). Pol II synthesizes mRNA precursors and many functional non-coding RNAs and is the central component of the basal RNA polymerase II transcription machinery. May play a role in the Mediator complex-dependent regulation of transcription activation. Acts as a negative regulator of transcriptional activation; this repression is relieved by the Mediator complex, which restores Pol II(G) activator-dependent transcription to a level equivalent to that of Pol II. The polypeptide is DNA-directed RNA polymerase II subunit GRINL1A (POLR2M) (Pongo abelii (Sumatran orangutan)).